We begin with the raw amino-acid sequence, 34 residues long: Cycloamanide B proprotein (34 aa).

Positions 1–10 (MSDINAARLP) are excised as a propeptide. A cross-link (cyclopeptide (Ser-Pro)) is located at residues 11 to 17 (SFFFPIP). Residues 18-34 (CISDDIEMVLTRGESLC) constitute a propeptide that is removed on maturation.

The protein belongs to the MSDIN fungal toxin family. Processed by the macrocyclase-peptidase enzyme POPB to yield a cyclic decapeptide. POPB first removes 10 residues from the N-terminus. Conformational trapping of the remaining peptide forces the enzyme to release this intermediate rather than proceed to macrocyclization. The enzyme rebinds the remaining peptide in a different conformation and catalyzes macrocyclization of the N-terminal 7 residues.

Cyclic heptapeptide that belongs to the MSDIN-like toxin family responsible for a large number of food poisoning cases and deaths. Cycloaminide B is non-toxic to mammals but shows immunosuppressive activity, probably through the inhibition of the action of interleukin-1 and interleukin-2. The chain is Cycloamanide B proprotein from Amanita phalloides (Death cap).